The following is a 740-amino-acid chain: Vacuolar protein sorting-associated protein 51 homolog (740 aa).

Coiled coils occupy residues 65 to 87 (SATD…VNLL) and 322 to 344 (RALD…LEVQ).

It belongs to the VPS51 family. Component of the Golgi-associated retrograde protein (GARP) complex.

Its function is as follows. May act as a component of the GARP complex that is involved in retrograde transport from early and late endosomes to the trans-Golgi network (TGN). The polypeptide is Vacuolar protein sorting-associated protein 51 homolog (Drosophila melanogaster (Fruit fly)).